The following is a 366-amino-acid chain: 3-dehydroquinate synthase (366 aa).

Residues 71-76 (DGEQYK), 105-109 (GVIGD), 129-130 (TT), Lys142, Lys151, and 169-172 (CLKT) contribute to the NAD(+) site. Zn(2+) contacts are provided by Glu184, His247, and His264.

Belongs to the sugar phosphate cyclases superfamily. Dehydroquinate synthase family. Co(2+) is required as a cofactor. It depends on Zn(2+) as a cofactor. NAD(+) serves as cofactor.

It is found in the cytoplasm. It catalyses the reaction 7-phospho-2-dehydro-3-deoxy-D-arabino-heptonate = 3-dehydroquinate + phosphate. The protein operates within metabolic intermediate biosynthesis; chorismate biosynthesis; chorismate from D-erythrose 4-phosphate and phosphoenolpyruvate: step 2/7. Its function is as follows. Catalyzes the conversion of 3-deoxy-D-arabino-heptulosonate 7-phosphate (DAHP) to dehydroquinate (DHQ). This is 3-dehydroquinate synthase from Serratia proteamaculans (strain 568).